We begin with the raw amino-acid sequence, 1005 residues long: Beta-galactosidase (1005 aa).

Residue Glu-455 is the Proton donor of the active site. The active-site Nucleophile is Glu-526.

It belongs to the glycosyl hydrolase 2 family.

The catalysed reaction is Hydrolysis of terminal non-reducing beta-D-galactose residues in beta-D-galactosides.. This chain is Beta-galactosidase (lacZ), found in Actinobacillus pleuropneumoniae (Haemophilus pleuropneumoniae).